The chain runs to 889 residues: DNA mismatch repair protein MutS (889 aa).

620 to 627 (GPNMAGKS) lines the ATP pocket. The tract at residues 812-831 (AAAPSGAARRGRPAREKEPG) is disordered.

Belongs to the DNA mismatch repair MutS family.

Its function is as follows. This protein is involved in the repair of mismatches in DNA. It is possible that it carries out the mismatch recognition step. This protein has a weak ATPase activity. The protein is DNA mismatch repair protein MutS of Syntrophobacter fumaroxidans (strain DSM 10017 / MPOB).